Reading from the N-terminus, the 118-residue chain is Small ribosomal subunit protein bTHXc (118 aa).

The N-terminal 55 residues, 1–55, are a transit peptide targeting the chloroplast; the sequence is MASLILGAPPRVTVALPSSRLSSSHSETAGVSLSCFTHQFSLSTSSSSSIPLVYC. The tract at residues 61–118 is disordered; it reads KTAKGKRFNHSFGNARPRNKSKGRGPERVPVPPAPPRKDKFENDEKIKIDIDESLFSN. Residues 96 to 111 are compositionally biased toward basic and acidic residues; it reads PRKDKFENDEKIKIDI. Residue Ser117 is modified to Phosphoserine.

This sequence belongs to the bacterial ribosomal protein bTHX family. Part of the 30S ribosomal subunit.

The protein localises to the plastid. The protein resides in the chloroplast. The protein is Small ribosomal subunit protein bTHXc (RPS31) of Arabidopsis thaliana (Mouse-ear cress).